The chain runs to 160 residues: Adenosine 5'-monophosphoramidase HINT3 (160 aa).

The 109-residue stretch at 24–132 (IFCTIAKGDD…LAPYSQLYKW (109 aa)) folds into the HIT domain. AMP contacts are provided by residues 50-51 (DI) and 119-121 (HLH). A Histidine triad motif motif is present at residues 117-121 (HLHLH). The Tele-AMP-histidine intermediate role is filled by histidine 119.

The protein belongs to the HINT family. As to quaternary structure, forms dimers to octamers and even larger oligomer.

It is found in the cytoplasm. It localises to the nucleus. It catalyses the reaction adenosine 5'-phosphoramidate + H2O = AMP + NH4(+). In terms of biological role, exhibits adenosine 5'-monophosphoramidase activity, hydrolyzing purine nucleotide phosphoramidates with a single phosphate group such as adenosine 5'monophosphoramidate (AMP-NH2) to yield AMP and NH2. Hydrolyzes lysyl-AMP (AMP-N-epsilon-(N-alpha-acetyl lysine methyl ester)) generated by lysine tRNA ligase. The chain is Adenosine 5'-monophosphoramidase HINT3 (hint3) from Danio rerio (Zebrafish).